The following is a 438-amino-acid chain: Trigger factor (438 aa).

The region spanning 160–245 is the PPIase FKBP-type domain; that stretch reads DDKVTIDFVG…VKKIQQAELP (86 aa).

It belongs to the FKBP-type PPIase family. Tig subfamily.

The protein resides in the cytoplasm. It carries out the reaction [protein]-peptidylproline (omega=180) = [protein]-peptidylproline (omega=0). Involved in protein export. Acts as a chaperone by maintaining the newly synthesized protein in an open conformation. Functions as a peptidyl-prolyl cis-trans isomerase. The chain is Trigger factor from Francisella tularensis subsp. holarctica (strain LVS).